Reading from the N-terminus, the 498-residue chain is MASQGTKRSYEQMETGGERQNATEIRASVGRMIGGIGRFYIQMCTELKLSDYEGRLIQNSITIERMVLSAFDERRNKYLEEHPSAGKDPKKTGGPIYRRIDGKWMRELILYDKEEIRRIWRQANNGEYATAGLTHIMIWHSNLNDATYQRTRALVRTGMDPRMCSLMQGSTLPRRSGAAGAAVKGVGTMVMELIRMIKRGINDRNFWRGENGRRTRIAYERMCNILKGKFQTAAQRAMMDQVRESRNPGNAEIEDLIFLARSALILRGSVAHKSCLPACVYGLAVASGHDFEREGYSLVGIDPFRLLQNSQVFSLIRPNENPAHKSQLVWMACHSAAFEDLRVSSFIRGKRVVPRGQLSTRGVQIASNENMETMDSSTLELRSRYWAIRTRSGGNTNQQRASAGQISVQPTFSVQRNLPFERATVMAAFIGNTEGRTSDMRTEIIRMMESARPEDVSFQGRGVFELSDEKATSPIVPSFDMSNEGSYFFGDNAEEYDN.

The Unconventional nuclear localization signal signature appears at 1-18; that stretch reads MASQGTKRSYEQMETGGE. The interval 1 to 21 is disordered; it reads MASQGTKRSYEQMETGGERQN. A Bipartite nuclear localization signal motif is present at residues 198-216; it reads KRGINDRNFWRGENGRRTR.

It belongs to the influenza viruses nucleoprotein family. In terms of assembly, homomultimerizes to form the nucleocapsid. May bind host exportin-1/XPO1. Binds to viral genomic RNA. Protein-RNA contacts are mediated by a combination of electrostatic interactions between positively charged residues and the phosphate backbone and planar interactions between aromatic side chains and bases. Post-translationally, late in virus-infected cells, may be cleaved from a 56-kDa protein to a 53-kDa protein by a cellular caspase. This cleavage might be a marker for the onset of apoptosis in infected cells or have a specific function in virus host interaction.

It localises to the virion. Its subcellular location is the host nucleus. Functionally, encapsidates the negative strand viral RNA, protecting it from nucleases. The encapsidated genomic RNA is termed the ribonucleoprotein (RNP) and serves as template for transcription and replication. The RNP needs to be localized in the host nucleus to start an infectious cycle, but is too large to diffuse through the nuclear pore complex. NP comprises at least 2 nuclear localization signals that are responsible for the active RNP import into the nucleus through cellular importin alpha/beta pathway. Later in the infection, nclear export of RNPs are mediated through viral proteins NEP interacting with M1 which binds nucleoproteins. It is possible that nucleoprotein binds directly host exportin-1/XPO1 and plays an active role in RNPs nuclear export. M1 interaction with RNP seems to hide nucleoprotein's nuclear localization signals. Soon after a virion infects a new cell, M1 dissociates from the RNP under acidification of the virion driven by M2 protein. Dissociation of M1 from RNP unmasks nucleoprotein's nuclear localization signals, targeting the RNP to the nucleus. The polypeptide is Nucleoprotein (Aves (Human)).